A 128-amino-acid polypeptide reads, in one-letter code: Small ribosomal subunit protein uS11 (128 aa).

It belongs to the universal ribosomal protein uS11 family. In terms of assembly, part of the 30S ribosomal subunit. Interacts with proteins S7 and S18. Binds to IF-3.

Its function is as follows. Located on the platform of the 30S subunit, it bridges several disparate RNA helices of the 16S rRNA. Forms part of the Shine-Dalgarno cleft in the 70S ribosome. This is Small ribosomal subunit protein uS11 from Leuconostoc mesenteroides subsp. mesenteroides (strain ATCC 8293 / DSM 20343 / BCRC 11652 / CCM 1803 / JCM 6124 / NCDO 523 / NBRC 100496 / NCIMB 8023 / NCTC 12954 / NRRL B-1118 / 37Y).